The chain runs to 152 residues: Ribonuclease H (152 aa).

The RNase H type-1 domain maps to 1 to 142 (MGSKVVIYTD…ADKLAVQGRE (142 aa)). Positions 10, 48, 70, and 134 each coordinate Mg(2+).

Belongs to the RNase H family. As to quaternary structure, monomer. Mg(2+) is required as a cofactor.

The protein resides in the cytoplasm. The catalysed reaction is Endonucleolytic cleavage to 5'-phosphomonoester.. Endonuclease that specifically degrades the RNA of RNA-DNA hybrids. In Rickettsia massiliae (strain Mtu5), this protein is Ribonuclease H.